Consider the following 294-residue polypeptide: Ribosomal protein L11 methyltransferase (294 aa).

Residues T144, G165, D187, and N229 each coordinate S-adenosyl-L-methionine.

It belongs to the methyltransferase superfamily. PrmA family.

The protein localises to the cytoplasm. It catalyses the reaction L-lysyl-[protein] + 3 S-adenosyl-L-methionine = N(6),N(6),N(6)-trimethyl-L-lysyl-[protein] + 3 S-adenosyl-L-homocysteine + 3 H(+). In terms of biological role, methylates ribosomal protein L11. This Cellvibrio japonicus (strain Ueda107) (Pseudomonas fluorescens subsp. cellulosa) protein is Ribosomal protein L11 methyltransferase.